A 427-amino-acid polypeptide reads, in one-letter code: Glutamate-1-semialdehyde 2,1-aminomutase (427 aa).

Lysine 265 is modified (N6-(pyridoxal phosphate)lysine).

This sequence belongs to the class-III pyridoxal-phosphate-dependent aminotransferase family. HemL subfamily. Homodimer. Requires pyridoxal 5'-phosphate as cofactor.

The protein resides in the cytoplasm. It carries out the reaction (S)-4-amino-5-oxopentanoate = 5-aminolevulinate. Its pathway is porphyrin-containing compound metabolism; protoporphyrin-IX biosynthesis; 5-aminolevulinate from L-glutamyl-tRNA(Glu): step 2/2. In Pseudomonas putida (strain ATCC 47054 / DSM 6125 / CFBP 8728 / NCIMB 11950 / KT2440), this protein is Glutamate-1-semialdehyde 2,1-aminomutase.